The chain runs to 505 residues: Catalase (505 aa).

Catalysis depends on residues H56 and N129. Y339 contacts heme.

This sequence belongs to the catalase family. The cofactor is heme.

It is found in the cytoplasm. The catalysed reaction is 2 H2O2 = O2 + 2 H2O. Functionally, decomposes hydrogen peroxide into water and oxygen; serves to protect cells from the toxic effects of hydrogen peroxide. This is Catalase (katA) from Helicobacter pylori (strain J99 / ATCC 700824) (Campylobacter pylori J99).